The primary structure comprises 543 residues: MTRFVFITGGVVSSLGKGIASAALAALLQARGYKVRMRKLDPYLNVDPGTMSPYQHGEVFITDDGAETDLDLGHYERFTGVHASRADNTTTGRIYSDVIARERRGDYLGGTVQVIPHITDAIKDVVVTGTDDYDFVLVEIGGTVGDIESLPFLEAIRQLRNDLGHAQTMCVHLTLLPYIPAAGELKTKPTQHSVKELQNVGIQPQMLLCRSDRPIPDNERRKIANFCNVRPEAVIAALDVDTIYACPISYHNEGMDQEVLRYFDLPYDSKPDLSRWEKIVHAIREPEGEVRVAIVGKYTALLDSYKSLAEALLHGGIANHVKVKLDWIESEEFEKNGNIAERLKDADAILVPGGFGERGAEGKIQAVRYAREHNIPFLGICFGMQMAVIECARSLAGLPKASSTEFGPTDEPLVGLMTEWARGSEMLRRREGGDLGGTMRLGAYPAKLVPGSRVAEIYGRTEIRERHRHRWEVNAHYKDRLEKTGLRFSGLSPDGVLPEVVEYPDHAWFVAVQYHPELLSKPFDPHPLFAGFIAAAVKEAHRK.

The segment at 1–265 (MTRFVFITGG…DQEVLRYFDL (265 aa)) is amidoligase domain. Serine 13 is a CTP binding site. Serine 13 serves as a coordination point for UTP. 14 to 19 (SLGKGI) contacts ATP. Position 54 (tyrosine 54) interacts with L-glutamine. Residue aspartate 71 coordinates ATP. The Mg(2+) site is built by aspartate 71 and glutamate 139. CTP is bound by residues 146 to 148 (DIE), 186 to 191 (KTKPTQ), and lysine 222. UTP contacts are provided by residues 186–191 (KTKPTQ) and lysine 222. The region spanning 291–542 (RVAIVGKYTA…IAAAVKEAHR (252 aa)) is the Glutamine amidotransferase type-1 domain. Residue glycine 354 participates in L-glutamine binding. Cysteine 381 (nucleophile; for glutamine hydrolysis) is an active-site residue. Residues 382–385 (FGMQ), glutamate 405, and arginine 470 contribute to the L-glutamine site. Catalysis depends on residues histidine 515 and glutamate 517.

The protein belongs to the CTP synthase family. In terms of assembly, homotetramer.

It catalyses the reaction UTP + L-glutamine + ATP + H2O = CTP + L-glutamate + ADP + phosphate + 2 H(+). It carries out the reaction L-glutamine + H2O = L-glutamate + NH4(+). The catalysed reaction is UTP + NH4(+) + ATP = CTP + ADP + phosphate + 2 H(+). It participates in pyrimidine metabolism; CTP biosynthesis via de novo pathway; CTP from UDP: step 2/2. With respect to regulation, allosterically activated by GTP, when glutamine is the substrate; GTP has no effect on the reaction when ammonia is the substrate. The allosteric effector GTP functions by stabilizing the protein conformation that binds the tetrahedral intermediate(s) formed during glutamine hydrolysis. Inhibited by the product CTP, via allosteric rather than competitive inhibition. Catalyzes the ATP-dependent amination of UTP to CTP with either L-glutamine or ammonia as the source of nitrogen. Regulates intracellular CTP levels through interactions with the four ribonucleotide triphosphates. The protein is CTP synthase of Gluconobacter oxydans (strain 621H) (Gluconobacter suboxydans).